The sequence spans 461 residues: Cysteine--tRNA ligase (461 aa).

C28 provides a ligand contact to Zn(2+). A 'HIGH' region motif is present at residues 30-40 (ITVYDLCHIGH). Positions 209, 234, and 238 each coordinate Zn(2+). Positions 266-270 (KMSKS) match the 'KMSKS' region motif. K269 contributes to the ATP binding site.

It belongs to the class-I aminoacyl-tRNA synthetase family. In terms of assembly, monomer. It depends on Zn(2+) as a cofactor.

The protein resides in the cytoplasm. The enzyme catalyses tRNA(Cys) + L-cysteine + ATP = L-cysteinyl-tRNA(Cys) + AMP + diphosphate. The polypeptide is Cysteine--tRNA ligase (Salmonella dublin (strain CT_02021853)).